The following is a 207-amino-acid chain: MIOREX complex component 11 (207 aa).

The transit peptide at 1–46 directs the protein to the mitochondrion; sequence MTVMNLFFRPCQLQMGSGPLELMLKRPTQLTTFMNTRPGGSTQIRF. At 47–98 the chain is on the mitochondrial matrix side; the sequence is ISGNLDPVKRREDRLRKIFSKSRLLTRLNKNPKFSHYFDRLSEAGTVPTLTS. A helical transmembrane segment spans residues 99 to 119; it reads FFILHEVTAILPLFLLWWLLY. Residues 120–177 lie on the Mitochondrial intermembrane side of the membrane; the sequence is NLDLSDDFKLPNFLNGLMDSCHTAMEKFVGKRYQECLNKNKLILSGTVAYVTVKLLYP. The helical transmembrane segment at 178 to 198 threads the bilayer; that stretch reads VRIFISIWGAPYFGKWLLLPF. Residues 199-207 lie on the Mitochondrial matrix side of the membrane; the sequence is QKLKHLIKK.

The protein belongs to the MRX11 family. Associates with the mitochondrial ribosome.

The protein resides in the mitochondrion. It localises to the mitochondrion inner membrane. Component of MIOREX complexes, large expressome-like assemblies of ribosomes with factors involved in all the steps of post-transcriptional gene expression. This chain is MIOREX complex component 11, found in Saccharomyces cerevisiae (strain ATCC 204508 / S288c) (Baker's yeast).